A 317-amino-acid chain; its full sequence is SWI/SNF-related matrix-associated actin-dependent regulator of chromatin subfamily E member 1-related (317 aa).

The segment covering 1 to 17 has biased composition (low complexity); it reads MSHGPKQPGAAAAPAGG. A disordered region spans residues 1-71; the sequence is MSHGPKQPGA…RKKILPNGPK (71 aa). K31 is covalently cross-linked (Glycyl lysine isopeptide (Lys-Gly) (interchain with G-Cter in SUMO2)). Positions 31–52 are enriched in basic and acidic residues; it reads KQERGEGPRAGEKGSHEEEPVK. Over residues 53–65 the composition is skewed to basic residues; that stretch reads KRGWPKGKKRKKI. Positions 70 to 138 form a DNA-binding region, HMG box; the sequence is PKAPVTGYVR…QYMKELRAYQ (69 aa). Position 160 is a phosphoserine (S160). Positions 190–257 form a coiled coil; sequence EEFLDQNKAR…LQQQLQAVRQ (68 aa).

In terms of assembly, component of a BHC histone deacetylase complex that contains HDAC1, HDAC2, HMG20B/BRAF35, KDM1A, RCOR1/CoREST and PHF21A/BHC80. The BHC complex may also contain ZMYM2, ZNF217, ZMYM3, GSE1 and GTF2I. Interacts with the BRCA2 tumor suppressor protein. Interacts with DTNB. In terms of tissue distribution, ubiquitously expressed in adult tissues.

The protein resides in the nucleus. It is found in the chromosome. Functionally, required for correct progression through G2 phase of the cell cycle and entry into mitosis. Required for RCOR1/CoREST mediated repression of neuronal specific gene promoters. This Homo sapiens (Human) protein is SWI/SNF-related matrix-associated actin-dependent regulator of chromatin subfamily E member 1-related (HMG20B).